A 343-amino-acid chain; its full sequence is N-acetyl-gamma-glutamyl-phosphate reductase (343 aa).

Residue C149 is part of the active site.

The protein belongs to the NAGSA dehydrogenase family. Type 1 subfamily.

It localises to the cytoplasm. The enzyme catalyses N-acetyl-L-glutamate 5-semialdehyde + phosphate + NADP(+) = N-acetyl-L-glutamyl 5-phosphate + NADPH + H(+). It functions in the pathway amino-acid biosynthesis; L-arginine biosynthesis; N(2)-acetyl-L-ornithine from L-glutamate: step 3/4. Its function is as follows. Catalyzes the NADPH-dependent reduction of N-acetyl-5-glutamyl phosphate to yield N-acetyl-L-glutamate 5-semialdehyde. The sequence is that of N-acetyl-gamma-glutamyl-phosphate reductase from Methanococcus maripaludis (strain C5 / ATCC BAA-1333).